Consider the following 419-residue polypeptide: DNA ligase (419 aa).

The interval 1 to 120 (MLNQFPGQYS…ARQKRGAHTN (120 aa)) is NTD. The tract at residues 121 to 317 (RGMIPPMLVK…NYHSAHLAKL (197 aa)) is AD domain. ATP contacts are provided by Q149, K151, E203, and F232. K151 serves as the catalytic N6-AMP-lysine intermediate. E203 contacts a divalent metal cation. E291 contributes to the a divalent metal cation binding site. I294 and K316 together coordinate ATP. Positions 318 to 419 (KPLLDAEFIL…REPINVLEII (102 aa)) are OB domain.

Belongs to the ATP-dependent DNA ligase family. A divalent metal cation is required as a cofactor.

The protein resides in the virion. It carries out the reaction ATP + (deoxyribonucleotide)n-3'-hydroxyl + 5'-phospho-(deoxyribonucleotide)m = (deoxyribonucleotide)n+m + AMP + diphosphate.. Very low-fidelity DNA ligase that seals nicks in double-stranded DNA during DNA repair. Together with the viral repair DNA polymerase X, fills the single nucleotide gaps generated by the AP endonuclease. It is not essential for viral replication and recombination. Displays a very low adenylation activity towards DNA with 3'-dideoxy- or 3'-amino-terminated nicks compared to regular nick DNA. The protein is DNA ligase (LIG) of Ornithodoros (relapsing fever ticks).